Here is a 90-residue protein sequence, read N- to C-terminus: MAVTYEKTFEIEIINELSASVYNRVLNYVLNHELNKNDSQLLEVNLLNQLKLAKRVNLFDYSLEELQAVHEYWRSMNRYSKQVLNKEKVA.

This sequence belongs to the epsilon antitoxin family. As to quaternary structure, in the presence of the zeta toxin, forms an inactive PezA(2)PezT(2) heterotetramer. The heterotetramer is still able to bind the zeta toxin substrate UNAG.

Its function is as follows. Antitoxin component of a type II toxin-antitoxin (TA) system. Neutralizes the toxic effect of cognate zeta toxin. Part of a postsegregational killing (PSK) system involved in the killing of plasmid-free cells. Continuous synthesis of the epsilon antitoxin is required to counteract the zeta toxin. The protein is Antitoxin epsilon of Streptococcus pyogenes.